The sequence spans 609 residues: UvrABC system protein C (609 aa).

In terms of domain architecture, GIY-YIG spans 13–91 (HQPGVYRMFD…IKAFQPRYNV (79 aa)). The UVR domain maps to 201–236 (QQVLEHLIKKMEQASMQLNFEQAAYFRDQIQAIRAV).

Belongs to the UvrC family. As to quaternary structure, interacts with UvrB in an incision complex.

It localises to the cytoplasm. In terms of biological role, the UvrABC repair system catalyzes the recognition and processing of DNA lesions. UvrC both incises the 5' and 3' sides of the lesion. The N-terminal half is responsible for the 3' incision and the C-terminal half is responsible for the 5' incision. The polypeptide is UvrABC system protein C (Histophilus somni (strain 2336) (Haemophilus somnus)).